A 508-amino-acid polypeptide reads, in one-letter code: CBL-interacting protein kinase 19 (508 aa).

Residues 1–24 (MAATPPSSQHRRPLSSSASAASLA) form a disordered region. Over residues 14-24 (LSSSASAASLA) the composition is skewed to low complexity. A Protein kinase domain is found at 37-291 (YELGRLLGHG…VKEVMESRWF (255 aa)). Residues 43–51 (LGHGTFAKV) and Lys66 each bind ATP. Catalysis depends on Asp159, which acts as the Proton acceptor. Residues 177–206 (DFGLSAVADQFHPDGLLHTFCGTPSYVAPE) are activation loop. Residues 311–372 (ADGDNDMPEL…EERRQRPLGS (62 aa)) form a disordered region. Acidic residues predominate over residues 313–322 (GDNDMPELEP). A compositionally biased stretch (pro residues) spans 323-337 (SEPPPPPPFPPPPPQ). Over residues 338-347 (QDDDGEESGW) the composition is skewed to acidic residues. The 45-residue stretch at 354–398 (ASCPATLSSEERRQRPLGSLTRPASLNAFDIISFSKGFDLSGLFE) folds into the NAF domain. Residues 401 to 430 (GSEVRFISAEPMQTIITKLEEIAKVKSFFV) are PPI.

This sequence belongs to the protein kinase superfamily. CAMK Ser/Thr protein kinase family. SNF1 subfamily. It depends on Mn(2+) as a cofactor. In terms of processing, autophosphorylated. In terms of tissue distribution, expressed in roots, leaf blades and sheaths and panicles.

The enzyme catalyses L-seryl-[protein] + ATP = O-phospho-L-seryl-[protein] + ADP + H(+). It catalyses the reaction L-threonyl-[protein] + ATP = O-phospho-L-threonyl-[protein] + ADP + H(+). In terms of biological role, CIPK serine-threonine protein kinases interact with CBL proteins. Binding of a CBL protein to the regulatory NAF domain of CIPK protein lead to the activation of the kinase in a calcium-dependent manner. The protein is CBL-interacting protein kinase 19 (CIPK19) of Oryza sativa subsp. japonica (Rice).